The chain runs to 160 residues: uncharacterized protein (160 aa).

C2H2-type zinc fingers lie at residues Leu10–His32, Gln41–His64, and Phe75–His98. Position 115 is a phosphotyrosine (Tyr115). At Ser116 the chain carries Phosphoserine.

Its subcellular location is the nucleus. Functionally, may be involved in transcriptional regulation. This is an uncharacterized protein from Drosophila melanogaster (Fruit fly).